The chain runs to 480 residues: Glucosylglycerol phosphorylase (480 aa).

Asp190 functions as the Nucleophile in the catalytic mechanism. Tyr194 lines the substrate pocket. Glu231 acts as the Proton donor in catalysis. Position 336 (Gln336) interacts with substrate.

Belongs to the glycosyl hydrolase 13 family. Sucrose phosphorylase subfamily.

It catalyses the reaction 2-O-(alpha-D-glucopyranosyl)glycerol + phosphate = alpha-D-glucose 1-phosphate + glycerol. In terms of biological role, catalyzes the reversible phosphorolysis of 2-O-alpha-D-glucosylglycerol with retention of the anomeric configuration, forming alpha-D-glucose 1-phosphate and glycerol. Has most likely a catabolic role, either regulating the intracellular levels of glucosylglycerol, which acts as a compatible solute, or degrading it when the environmental conditions change. Cannot catalyze the phosphorolysis of sucrose or glucosylglycerate. This chain is Glucosylglycerol phosphorylase, found in Marinobacter adhaerens (strain DSM 23420 / HP15).